Reading from the N-terminus, the 88-residue chain is Small ribosomal subunit protein bS20 (88 aa).

The disordered stretch occupies residues 1–23; that stretch reads MANSPQAKKRARQNDKARAHNAS.

It belongs to the bacterial ribosomal protein bS20 family.

In terms of biological role, binds directly to 16S ribosomal RNA. The sequence is that of Small ribosomal subunit protein bS20 from Saccharophagus degradans (strain 2-40 / ATCC 43961 / DSM 17024).